Consider the following 67-residue polypeptide: uncharacterized protein (67 aa).

This is an uncharacterized protein from Caenorhabditis elegans.